A 561-amino-acid polypeptide reads, in one-letter code: Serine palmitoyltransferase 2 (561 aa).

Residues 57–77 (PYYISLLTYLNYLILIILGHV) form a helical membrane-spanning segment. Position 366 is an N6-(pyridoxal phosphate)lysine (K366). Residues 443–463 (LGFIVYGVADSPVIPLLLYCP) form a helical membrane-spanning segment.

The protein belongs to the class-II pyridoxal-phosphate-dependent aminotransferase family. LCB1 and LCB2 encode essential subunits of the enzyme and form a heterodimer. Component of the SPOTS complex, at least composed of LCB1/2 (LCB1 and/or LCB2), ORM1/2 (ORM1 and/or ORM2), SAC1 and TSC3. Interacts with LCB1 and TSC3. Pyridoxal 5'-phosphate serves as cofactor.

Its subcellular location is the cytoplasm. The protein resides in the endoplasmic reticulum. The protein localises to the membrane. It catalyses the reaction L-serine + hexadecanoyl-CoA + H(+) = 3-oxosphinganine + CO2 + CoA. The protein operates within lipid metabolism; sphingolipid metabolism. Its function is as follows. Catalytic subunit of serine palmitoyltransferase (SPT), which catalyzes the committed step in the synthesis of sphingolipids, the condensation of serine with palmitoyl CoA to form the long chain base 3-ketosphinganine. The sequence is that of Serine palmitoyltransferase 2 (LCB2) from Saccharomyces cerevisiae (strain ATCC 204508 / S288c) (Baker's yeast).